A 542-amino-acid chain; its full sequence is Chaperonin GroEL (542 aa).

ATP contacts are provided by residues 29–32 (TLGP), 86–90 (DGTTT), Gly-413, 476–478 (NAA), and Asp-492. Residues 522 to 542 (PDENGPAAVPDMGMGGMGGMM) form a disordered region.

The protein belongs to the chaperonin (HSP60) family. As to quaternary structure, forms a cylinder of 14 subunits composed of two heptameric rings stacked back-to-back. Interacts with the co-chaperonin GroES.

The protein resides in the cytoplasm. It catalyses the reaction ATP + H2O + a folded polypeptide = ADP + phosphate + an unfolded polypeptide.. Together with its co-chaperonin GroES, plays an essential role in assisting protein folding. The GroEL-GroES system forms a nano-cage that allows encapsulation of the non-native substrate proteins and provides a physical environment optimized to promote and accelerate protein folding. The chain is Chaperonin GroEL from Listeria monocytogenes serotype 4a (strain HCC23).